The primary structure comprises 368 residues: 1-aminocyclopropane-1-carboxylate synthase (368 aa).

Position 230 is an N6-(pyridoxal phosphate)lysine (K230).

This sequence belongs to the class-I pyridoxal-phosphate-dependent aminotransferase family. In terms of assembly, homodimer. It depends on pyridoxal 5'-phosphate as a cofactor.

The catalysed reaction is S-adenosyl-L-methionine = 1-aminocyclopropane-1-carboxylate + S-methyl-5'-thioadenosine + H(+). The protein operates within alkene biosynthesis; ethylene biosynthesis via S-adenosyl-L-methionine; ethylene from S-adenosyl-L-methionine: step 1/2. Functionally, catalyzes the formation of 1-aminocyclopropane-1-carboxylate, a direct precursor of ethylene in higher plants. The polypeptide is 1-aminocyclopropane-1-carboxylate synthase (ACS5) (Vigna radiata var. radiata (Mung bean)).